The chain runs to 303 residues: Ribonuclease HIII (303 aa).

Residues 89–303 (WSVLGSDEVG…ANTKKAERLL (215 aa)) enclose the RNase H type-2 domain. Asp-95, Glu-96, and Asp-199 together coordinate a divalent metal cation.

The protein belongs to the RNase HII family. RnhC subfamily. Mn(2+) serves as cofactor. Mg(2+) is required as a cofactor.

Its subcellular location is the cytoplasm. The catalysed reaction is Endonucleolytic cleavage to 5'-phosphomonoester.. Endonuclease that specifically degrades the RNA of RNA-DNA hybrids. The chain is Ribonuclease HIII from Leuconostoc mesenteroides subsp. mesenteroides (strain ATCC 8293 / DSM 20343 / BCRC 11652 / CCM 1803 / JCM 6124 / NCDO 523 / NBRC 100496 / NCIMB 8023 / NCTC 12954 / NRRL B-1118 / 37Y).